Consider the following 230-residue polypeptide: Cytochrome c-552 (230 aa).

The signal sequence occupies residues 1 to 47 (MTTYLSQDRLRNKENDTMTYQHSKMYQSRTFLLFSALLLVAGQASAA). Heme c is bound by residues Cys63, Cys66, His67, Cys166, Cys169, and His170.

Binds 2 heme c groups covalently per subunit.

The protein resides in the periplasm. In terms of biological role, diheme, high potential cytochrome c. The polypeptide is Cytochrome c-552 (cyc1) (Acidithiobacillus ferridurans).